Here is a 454-residue protein sequence, read N- to C-terminus: Bifunctional protein GlmU (454 aa).

The interval 1 to 232 (MTDRTCLSIV…VDNVIGINNR (232 aa)) is pyrophosphorylase. Residues 11–14 (LAAG), K25, Q78, and 83–84 (GT) each bind UDP-N-acetyl-alpha-D-glucosamine. Position 108 (D108) interacts with Mg(2+). 4 residues coordinate UDP-N-acetyl-alpha-D-glucosamine: G144, E158, N173, and N230. Residue N230 participates in Mg(2+) binding. A linker region spans residues 233-253 (AELAEAETIWQNRKRRELMLS). Positions 254–454 (GVTLIAPETV…AIKAAKSVSK (201 aa)) are N-acetyltransferase. UDP-N-acetyl-alpha-D-glucosamine-binding residues include R319 and K337. Catalysis depends on H349, which acts as the Proton acceptor. The UDP-N-acetyl-alpha-D-glucosamine site is built by Y352 and N363. Acetyl-CoA contacts are provided by residues A366, 372-373 (NY), S391, S409, and R426.

In the N-terminal section; belongs to the N-acetylglucosamine-1-phosphate uridyltransferase family. This sequence in the C-terminal section; belongs to the transferase hexapeptide repeat family. Homotrimer. Requires Mg(2+) as cofactor.

Its subcellular location is the cytoplasm. It carries out the reaction alpha-D-glucosamine 1-phosphate + acetyl-CoA = N-acetyl-alpha-D-glucosamine 1-phosphate + CoA + H(+). It catalyses the reaction N-acetyl-alpha-D-glucosamine 1-phosphate + UTP + H(+) = UDP-N-acetyl-alpha-D-glucosamine + diphosphate. The protein operates within nucleotide-sugar biosynthesis; UDP-N-acetyl-alpha-D-glucosamine biosynthesis; N-acetyl-alpha-D-glucosamine 1-phosphate from alpha-D-glucosamine 6-phosphate (route II): step 2/2. It functions in the pathway nucleotide-sugar biosynthesis; UDP-N-acetyl-alpha-D-glucosamine biosynthesis; UDP-N-acetyl-alpha-D-glucosamine from N-acetyl-alpha-D-glucosamine 1-phosphate: step 1/1. Its pathway is bacterial outer membrane biogenesis; LPS lipid A biosynthesis. Catalyzes the last two sequential reactions in the de novo biosynthetic pathway for UDP-N-acetylglucosamine (UDP-GlcNAc). The C-terminal domain catalyzes the transfer of acetyl group from acetyl coenzyme A to glucosamine-1-phosphate (GlcN-1-P) to produce N-acetylglucosamine-1-phosphate (GlcNAc-1-P), which is converted into UDP-GlcNAc by the transfer of uridine 5-monophosphate (from uridine 5-triphosphate), a reaction catalyzed by the N-terminal domain. The protein is Bifunctional protein GlmU of Brucella canis (strain ATCC 23365 / NCTC 10854 / RM-666).